The following is a 267-amino-acid chain: Eukaryotic translation initiation factor 3 subunit K (267 aa).

Residues F46 to R233 form the PCI domain.

The protein belongs to the eIF-3 subunit K family. In terms of assembly, component of the eukaryotic translation initiation factor 3 (eIF-3) complex.

It localises to the cytoplasm. Functionally, component of the eukaryotic translation initiation factor 3 (eIF-3) complex, which is involved in protein synthesis of a specialized repertoire of mRNAs and, together with other initiation factors, stimulates binding of mRNA and methionyl-tRNAi to the 40S ribosome. The eIF-3 complex specifically targets and initiates translation of a subset of mRNAs involved in cell proliferation. This chain is Eukaryotic translation initiation factor 3 subunit K, found in Aspergillus niger (strain ATCC MYA-4892 / CBS 513.88 / FGSC A1513).